We begin with the raw amino-acid sequence, 151 residues long: Ubiquitin-conjugating enzyme E2 N (151 aa).

The UBC core domain maps to serine 3–valine 149. Residue cysteine 87 is the Glycyl thioester intermediate of the active site.

This sequence belongs to the ubiquitin-conjugating enzyme family.

It carries out the reaction S-ubiquitinyl-[E1 ubiquitin-activating enzyme]-L-cysteine + [E2 ubiquitin-conjugating enzyme]-L-cysteine = [E1 ubiquitin-activating enzyme]-L-cysteine + S-ubiquitinyl-[E2 ubiquitin-conjugating enzyme]-L-cysteine.. It participates in protein modification; protein ubiquitination. Catalyzes the covalent attachment of ubiquitin to other proteins. The protein is Ubiquitin-conjugating enzyme E2 N (ben) of Drosophila melanogaster (Fruit fly).